The following is a 348-amino-acid chain: Heat-inducible transcription repressor HrcA (348 aa).

This sequence belongs to the HrcA family.

In terms of biological role, negative regulator of class I heat shock genes (grpE-dnaK-dnaJ and groELS operons). Prevents heat-shock induction of these operons. This chain is Heat-inducible transcription repressor HrcA, found in Syntrophobacter fumaroxidans (strain DSM 10017 / MPOB).